Reading from the N-terminus, the 164-residue chain is Dehydrin Rab16C (164 aa).

Residues 42 to 51 (MGGHHAGAGG) are compositionally biased toward gly residues. Positions 42-164 (MGGHHAGAGG…KIKEKLPGQH (123 aa)) are disordered. Low complexity predominate over residues 105–115 (GNNQQQQQMMG). Over residues 128–138 (GMTGAGTGTGV) the composition is skewed to gly residues. Over residues 147–164 (GEKKGFMDKIKEKLPGQH) the composition is skewed to basic and acidic residues.

It belongs to the plant dehydrin family.

The protein is Dehydrin Rab16C (RAB16C) of Oryza sativa subsp. japonica (Rice).